The sequence spans 489 residues: 2-(3-amino-3-carboxypropyl)histidine synthase subunit 2 (489 aa).

M1 is modified (N-acetylmethionine). At S7 the chain carries Phosphoserine. Residues C89, C110, and C341 each coordinate [4Fe-4S] cluster. S446 is subject to Phosphoserine. At T467 the chain carries Phosphothreonine. Position 488 is a phosphoserine (S488).

Belongs to the DPH1/DPH2 family. DPH2 subfamily. As to quaternary structure, component of the 2-(3-amino-3-carboxypropyl)histidine synthase complex composed of DPH1, DPH2, DPH3 and a NADH-dependent reductase. Interacts with DPH1. [4Fe-4S] cluster serves as cofactor.

The protein operates within protein modification; peptidyl-diphthamide biosynthesis. Its function is as follows. Required for the first step of diphthamide biosynthesis, a post-translational modification of histidine which occurs in elongation factor 2. DPH1 and DPH2 transfer a 3-amino-3-carboxypropyl (ACP) group from S-adenosyl-L-methionine (SAM) to a histidine residue, the reaction is assisted by a reduction system comprising DPH3 and a NADH-dependent reductase. Facilitates the reduction of the catalytic iron-sulfur cluster found in the DPH1 subunit. This is 2-(3-amino-3-carboxypropyl)histidine synthase subunit 2 (Dph2) from Mus musculus (Mouse).